The following is a 413-amino-acid chain: Histidine--tRNA ligase (413 aa).

Belongs to the class-II aminoacyl-tRNA synthetase family. Homodimer.

The protein localises to the cytoplasm. It catalyses the reaction tRNA(His) + L-histidine + ATP = L-histidyl-tRNA(His) + AMP + diphosphate + H(+). The chain is Histidine--tRNA ligase (hisS) from Rickettsia prowazekii (strain Madrid E).